The following is a 163-amino-acid chain: Transcription elongation factor GreB (163 aa).

Residues 54–76 are a coiled coil; it reads GKRRMREIDRRIRFLTKRLEAAV.

It belongs to the GreA/GreB family. GreB subfamily.

Functionally, necessary for efficient RNA polymerase transcription elongation past template-encoded arresting sites. The arresting sites in DNA have the property of trapping a certain fraction of elongating RNA polymerases that pass through, resulting in locked ternary complexes. Cleavage of the nascent transcript by cleavage factors such as GreA or GreB allows the resumption of elongation from the new 3'terminus. GreB releases sequences of up to 9 nucleotides in length. The polypeptide is Transcription elongation factor GreB (Neisseria meningitidis serogroup A / serotype 4A (strain DSM 15465 / Z2491)).